The sequence spans 776 residues: Kinesin-like protein KIN-8A (776 aa).

Disordered regions lie at residues 1 to 31 and 80 to 135; these read MPVS…RGGA and VGEV…KSSH. Positions 7–26 are enriched in low complexity; the sequence is ASAAGGQPWSSAAPAPASAP. Pro residues predominate over residues 123 to 132; sequence PPPPPAPPPK. Residues 205–534 form the Kinesin motor domain; sequence RIMVFVRLRP…LHWADRAKEI (330 aa). ATP is bound at residue 297–304; it reads GATGAGKT. The stretch at 554–592 forms a coiled coil; it reads TDQAKLVLELQKENSELRQQLARQQQKLLTVQAQTLASN. The disordered stretch occupies residues 590–611; the sequence is ASNASPQQSPAPSAQISTPCST. Low complexity predominate over residues 593–604; it reads ASPQQSPAPSAQ. The stretch at 634–671 forms a coiled coil; sequence AAENAQVRDLQRKVKAMEAEIEKMKKEHLLQLKQKDEF.

It belongs to the TRAFAC class myosin-kinesin ATPase superfamily. Kinesin family. KIN-8 subfamily.

This is Kinesin-like protein KIN-8A from Oryza sativa subsp. japonica (Rice).